Reading from the N-terminus, the 442-residue chain is UDP-N-acetylmuramoylalanine--D-glutamate ligase (442 aa).

Residue 109-115 (GSNGKTT) coordinates ATP.

The protein belongs to the MurCDEF family.

It is found in the cytoplasm. It carries out the reaction UDP-N-acetyl-alpha-D-muramoyl-L-alanine + D-glutamate + ATP = UDP-N-acetyl-alpha-D-muramoyl-L-alanyl-D-glutamate + ADP + phosphate + H(+). It functions in the pathway cell wall biogenesis; peptidoglycan biosynthesis. Cell wall formation. Catalyzes the addition of glutamate to the nucleotide precursor UDP-N-acetylmuramoyl-L-alanine (UMA). This Solibacter usitatus (strain Ellin6076) protein is UDP-N-acetylmuramoylalanine--D-glutamate ligase.